The following is a 177-amino-acid chain: Ribosome maturation factor RimM (177 aa).

The 80-residue stretch at 98–177 folds into the PRC barrel domain; that stretch reads GEEFYWRELY…RIEVDWDPGF (80 aa).

This sequence belongs to the RimM family. In terms of assembly, binds ribosomal protein uS19.

The protein localises to the cytoplasm. An accessory protein needed during the final step in the assembly of 30S ribosomal subunit, possibly for assembly of the head region. Essential for efficient processing of 16S rRNA. May be needed both before and after RbfA during the maturation of 16S rRNA. It has affinity for free ribosomal 30S subunits but not for 70S ribosomes. In Photobacterium profundum (strain SS9), this protein is Ribosome maturation factor RimM.